The following is a 264-amino-acid chain: Thymidylate synthase (264 aa).

Residue R21 participates in dUMP binding. H51 serves as a coordination point for (6R)-5,10-methylene-5,6,7,8-tetrahydrofolate. Position 126–127 (126–127 (RR)) interacts with dUMP. C146 (nucleophile) is an active-site residue. DUMP-binding positions include 166–169 (RSCD), N177, and 207–209 (HLY). D169 lines the (6R)-5,10-methylene-5,6,7,8-tetrahydrofolate pocket. A263 contacts (6R)-5,10-methylene-5,6,7,8-tetrahydrofolate.

It belongs to the thymidylate synthase family. Bacterial-type ThyA subfamily. In terms of assembly, homodimer.

The protein resides in the cytoplasm. It carries out the reaction dUMP + (6R)-5,10-methylene-5,6,7,8-tetrahydrofolate = 7,8-dihydrofolate + dTMP. Its pathway is pyrimidine metabolism; dTTP biosynthesis. In terms of biological role, catalyzes the reductive methylation of 2'-deoxyuridine-5'-monophosphate (dUMP) to 2'-deoxythymidine-5'-monophosphate (dTMP) while utilizing 5,10-methylenetetrahydrofolate (mTHF) as the methyl donor and reductant in the reaction, yielding dihydrofolate (DHF) as a by-product. This enzymatic reaction provides an intracellular de novo source of dTMP, an essential precursor for DNA biosynthesis. The chain is Thymidylate synthase from Shewanella sp. (strain ANA-3).